Consider the following 310-residue polypeptide: Ribosomal RNA small subunit methyltransferase H (310 aa).

S-adenosyl-L-methionine is bound by residues A32–H34, D51, F84, D102, and Q109.

The protein belongs to the methyltransferase superfamily. RsmH family.

Its subcellular location is the cytoplasm. It catalyses the reaction cytidine(1402) in 16S rRNA + S-adenosyl-L-methionine = N(4)-methylcytidine(1402) in 16S rRNA + S-adenosyl-L-homocysteine + H(+). Its function is as follows. Specifically methylates the N4 position of cytidine in position 1402 (C1402) of 16S rRNA. The sequence is that of Ribosomal RNA small subunit methyltransferase H from Campylobacter hominis (strain ATCC BAA-381 / DSM 21671 / CCUG 45161 / LMG 19568 / NCTC 13146 / CH001A).